An 80-amino-acid chain; its full sequence is Acyl carrier protein (80 aa).

The Carrier domain occupies Asp-4–Lys-79. Ser-39 is modified (O-(pantetheine 4'-phosphoryl)serine).

The protein belongs to the acyl carrier protein (ACP) family. In terms of processing, 4'-phosphopantetheine is transferred from CoA to a specific serine of apo-ACP by AcpS. This modification is essential for activity because fatty acids are bound in thioester linkage to the sulfhydryl of the prosthetic group.

It localises to the cytoplasm. It participates in lipid metabolism; fatty acid biosynthesis. Its function is as follows. Carrier of the growing fatty acid chain in fatty acid biosynthesis. This Borrelia garinii subsp. bavariensis (strain ATCC BAA-2496 / DSM 23469 / PBi) (Borreliella bavariensis) protein is Acyl carrier protein.